The sequence spans 328 residues: tRNA uridine(34) hydroxylase (328 aa).

In terms of domain architecture, Rhodanese spans 130-224 (LDEDTVVLDT…YGKDPEVQGE (95 aa)). Cys184 acts as the Cysteine persulfide intermediate in catalysis.

This sequence belongs to the TrhO family.

The enzyme catalyses uridine(34) in tRNA + AH2 + O2 = 5-hydroxyuridine(34) in tRNA + A + H2O. Functionally, catalyzes oxygen-dependent 5-hydroxyuridine (ho5U) modification at position 34 in tRNAs. This Streptococcus pyogenes serotype M28 (strain MGAS6180) protein is tRNA uridine(34) hydroxylase.